Here is a 324-residue protein sequence, read N- to C-terminus: Cyclic GMP-AMP synthase CdnE03 (324 aa).

Mg(2+) is bound by residues Asp87 and Asp89. ATP-binding positions include Asp89, 144–145 (NK), and Asp159. Asp159 contacts Mg(2+). Residues Lys224 and Ser243 each coordinate GTP.

The protein belongs to the CD-NTase family. E03 subfamily. The cofactor is Mg(2+).

It carries out the reaction GTP + ATP = 3',2'-cGAMP + 2 diphosphate. Activated by a virus-derived, approximately 400 nucleotide RNA (called CBASS-activating bacteriophage RNA, cabRNA) that begins in the viral terminase subunit terS and extends into terL. RNA secondary and/or tertiary structure, as well as viral infection itself, are important for CdnE activation. A much longer RNA (escaper RNA) with a different secondary structure, derived from a terS-mutated virus still binds to this protein, but does not activate its nucleotide cyclase activity. Shorter viral-derived RNAs (34 and 49 nt) with extensive predicted secondary structure also activate the enzyme, although not as well as full-length cabRNA. Cyclic nucleotide synthase (second messenger synthase) of a CBASS antivirus system. CBASS (cyclic oligonucleotide-based antiphage signaling system) provides immunity against bacteriophage. The CD-NTase protein synthesizes cyclic nucleotides in response to infection; these serve as specific second messenger signals. The signals activate a diverse range of effectors, leading to bacterial cell death and thus abortive phage infection. The effector for this system is downstream Cap15. A type I-B CBASS system. Its function is as follows. Cyclic dinucleotide synthase that catalyzes the synthesis of 3',2'-cyclic GMP-AMP (cGAMP) from GTP and ATP upon activation by viral-derived cabRNA. Binds cabRNA via positive charges in its N-terminus. In terms of biological role, protects S.aureus against phage infection. When the CBASS operon (cdnE-cap15) is introduced in S.aureus strain RN4220 there is strong protection against lytic DNA phages 80alpha-vir and phi-NM1-gamma-6 but little to no protection against phages phi-NM4-gamma-4 or phi-12-gamma-3. This is Cyclic GMP-AMP synthase CdnE03 from Staphylococcus schleiferi.